A 669-amino-acid chain; its full sequence is DNA ligase (669 aa).

NAD(+) contacts are provided by residues aspartate 35–aspartate 39, serine 84–leucine 85, and glutamate 116. The N6-AMP-lysine intermediate role is filled by lysine 118. 4 residues coordinate NAD(+): arginine 139, glutamate 176, lysine 291, and lysine 315. The Zn(2+) site is built by cysteine 409, cysteine 412, cysteine 427, and cysteine 432. A BRCT domain is found at threonine 591–alanine 669.

The protein belongs to the NAD-dependent DNA ligase family. LigA subfamily. Requires Mg(2+) as cofactor. Mn(2+) serves as cofactor.

It catalyses the reaction NAD(+) + (deoxyribonucleotide)n-3'-hydroxyl + 5'-phospho-(deoxyribonucleotide)m = (deoxyribonucleotide)n+m + AMP + beta-nicotinamide D-nucleotide.. In terms of biological role, DNA ligase that catalyzes the formation of phosphodiester linkages between 5'-phosphoryl and 3'-hydroxyl groups in double-stranded DNA using NAD as a coenzyme and as the energy source for the reaction. It is essential for DNA replication and repair of damaged DNA. The chain is DNA ligase from Microcystis aeruginosa (strain NIES-843 / IAM M-2473).